Consider the following 357-residue polypeptide: Protein MGF 360-8L (357 aa).

This sequence belongs to the asfivirus MGF 360 family.

Functionally, plays a role in virus cell tropism, and may be required for efficient virus replication in macrophages. In African swine fever virus (isolate Tick/South Africa/Pretoriuskop Pr4/1996) (ASFV), this protein is Protein MGF 360-8L.